The following is a 239-amino-acid chain: Leucine rich adaptor protein 1 (239 aa).

LRR repeat units lie at residues 55–83 and 93–114; these read LGDK…LVTL and LLEE…QYSL. Residues 107 to 116 are compositionally biased toward low complexity; sequence LTSSQYSLTG. Disordered stretches follow at residues 107 to 139 and 200 to 219; these read LTSS…TDRL and KPPG…DESA. Residues Ser-118, Ser-126, Ser-129, and Ser-213 each carry the phosphoserine modification.

In terms of assembly, forms a tripartite complex with CDC42BPA/CDC42BPB and MYO18A acting as an adapter connecting both. Its binding to CDC42BPA/CDC42BPB results in their activation by abolition of their negative autoregulation. Interacts with CDC42BPA and CDC42BPB.

The protein resides in the cytoplasm. In terms of biological role, acts as an activator of the canonical NF-kappa-B pathway and drive the production of pro-inflammatory cytokines. Promotes the antigen (Ag)-presenting and priming function of dendritic cells via the canonical NF-kappa-B pathway. In concert with MYO18A and CDC42BPA/CDC42BPB, is involved in modulating lamellar actomyosin retrograde flow that is crucial to cell protrusion and migration. Activates CDC42BPA/CDC42BPB and targets it to actomyosin through its interaction with MYO18A, leading to MYL9/MLC2 phosphorylation and MYH9/MYH10-dependent actomyosin assembly in the lamella. The chain is Leucine rich adaptor protein 1 (LURAP1) from Homo sapiens (Human).